The primary structure comprises 336 residues: Holliday junction branch migration complex subunit RuvB (336 aa).

Residues 1–11 (MDDDKLLSGDK) are compositionally biased toward basic and acidic residues. The tract at residues 1 to 21 (MDDDKLLSGDKADDEEASLEK) is disordered. The interval 1–184 (MDDDKLLSGD…FGIVEHMAYY (184 aa)) is large ATPase domain (RuvB-L). ATP contacts are provided by residues Leu-23, Arg-24, Gly-65, Lys-68, Thr-69, Thr-70, 131–133 (EDF), Arg-174, Tyr-184, and Arg-221. Thr-69 provides a ligand contact to Mg(2+). A small ATPAse domain (RuvB-S) region spans residues 185-255 (EVADLEDIVK…IVARSLTYLR (71 aa)). Residues 258 to 336 (DAGLDETDNK…HLGFPYPENK (79 aa)) are head domain (RuvB-H). 2 residues coordinate DNA: Arg-313 and Arg-318.

Belongs to the RuvB family. Homohexamer. Forms an RuvA(8)-RuvB(12)-Holliday junction (HJ) complex. HJ DNA is sandwiched between 2 RuvA tetramers; dsDNA enters through RuvA and exits via RuvB. An RuvB hexamer assembles on each DNA strand where it exits the tetramer. Each RuvB hexamer is contacted by two RuvA subunits (via domain III) on 2 adjacent RuvB subunits; this complex drives branch migration. In the full resolvosome a probable DNA-RuvA(4)-RuvB(12)-RuvC(2) complex forms which resolves the HJ.

It localises to the cytoplasm. The catalysed reaction is ATP + H2O = ADP + phosphate + H(+). The RuvA-RuvB-RuvC complex processes Holliday junction (HJ) DNA during genetic recombination and DNA repair, while the RuvA-RuvB complex plays an important role in the rescue of blocked DNA replication forks via replication fork reversal (RFR). RuvA specifically binds to HJ cruciform DNA, conferring on it an open structure. The RuvB hexamer acts as an ATP-dependent pump, pulling dsDNA into and through the RuvAB complex. RuvB forms 2 homohexamers on either side of HJ DNA bound by 1 or 2 RuvA tetramers; 4 subunits per hexamer contact DNA at a time. Coordinated motions by a converter formed by DNA-disengaged RuvB subunits stimulates ATP hydrolysis and nucleotide exchange. Immobilization of the converter enables RuvB to convert the ATP-contained energy into a lever motion, pulling 2 nucleotides of DNA out of the RuvA tetramer per ATP hydrolyzed, thus driving DNA branch migration. The RuvB motors rotate together with the DNA substrate, which together with the progressing nucleotide cycle form the mechanistic basis for DNA recombination by continuous HJ branch migration. Branch migration allows RuvC to scan DNA until it finds its consensus sequence, where it cleaves and resolves cruciform DNA. In Lactiplantibacillus plantarum (strain ATCC BAA-793 / NCIMB 8826 / WCFS1) (Lactobacillus plantarum), this protein is Holliday junction branch migration complex subunit RuvB.